Consider the following 775-residue polypeptide: 5-methyltetrahydropteroyltriglutamate--homocysteine methyltransferase (775 aa).

Residues 16 to 19 (REMK) and lysine 115 contribute to the 5-methyltetrahydropteroyltri-L-glutamate site. Residues 435–437 (IGS) and glutamate 488 each bind L-homocysteine. L-methionine is bound by residues 435–437 (IGS) and glutamate 488. 5-methyltetrahydropteroyltri-L-glutamate contacts are provided by residues 519–520 (RC) and tryptophan 565. Aspartate 603 is a binding site for L-homocysteine. Aspartate 603 contributes to the L-methionine binding site. A 5-methyltetrahydropteroyltri-L-glutamate-binding site is contributed by glutamate 609. Residues histidine 645, cysteine 647, and glutamate 669 each coordinate Zn(2+). Histidine 698 functions as the Proton donor in the catalytic mechanism. Residue cysteine 730 coordinates Zn(2+).

Belongs to the vitamin-B12 independent methionine synthase family. The cofactor is Zn(2+).

The catalysed reaction is 5-methyltetrahydropteroyltri-L-glutamate + L-homocysteine = tetrahydropteroyltri-L-glutamate + L-methionine. It participates in amino-acid biosynthesis; L-methionine biosynthesis via de novo pathway; L-methionine from L-homocysteine (MetE route): step 1/1. Functionally, catalyzes the transfer of a methyl group from 5-methyltetrahydrofolate to homocysteine resulting in methionine formation. This is 5-methyltetrahydropteroyltriglutamate--homocysteine methyltransferase from Coxiella burnetii (strain RSA 331 / Henzerling II).